A 267-amino-acid chain; its full sequence is Coiled-coil domain-containing protein 90B, mitochondrial (267 aa).

A mitochondrion-targeting transit peptide spans 1 to 47 (MKGSQLYRHLSLQGNRLHLHLFQGKKLQLHPSQGHKGTAHRTWKKGF). Residues 142–175 (LEKSEFATLRAENEKMKIELEHVRQHLLNETNRI) adopt a coiled-coil conformation. A helical membrane pass occupies residues 244 to 266 (TVRYMAASVFTCLAIALGFYRLW).

This sequence belongs to the CCDC90 family.

It localises to the mitochondrion membrane. In Xenopus tropicalis (Western clawed frog), this protein is Coiled-coil domain-containing protein 90B, mitochondrial (ccdc90b).